The following is a 513-amino-acid chain: Histidine ammonia-lyase (513 aa).

The segment at residues 144–146 (ASG) is a cross-link (5-imidazolinone (Ala-Gly)). 2,3-didehydroalanine (Ser) is present on Ser145.

Belongs to the PAL/histidase family. Contains an active site 4-methylidene-imidazol-5-one (MIO), which is formed autocatalytically by cyclization and dehydration of residues Ala-Ser-Gly.

The protein localises to the cytoplasm. The catalysed reaction is L-histidine = trans-urocanate + NH4(+). It functions in the pathway amino-acid degradation; L-histidine degradation into L-glutamate; N-formimidoyl-L-glutamate from L-histidine: step 1/3. This Streptococcus pyogenes serotype M49 (strain NZ131) protein is Histidine ammonia-lyase.